The following is a 237-amino-acid chain: Uridylate kinase (237 aa).

11 to 14 (KLSG) is an ATP binding site. Gly-53 provides a ligand contact to UMP. Gly-54 and Arg-58 together coordinate ATP. UMP-binding positions include Asp-73 and 134–141 (TGNPFFTT). The ATP site is built by Thr-161, Tyr-167, and Asp-170.

This sequence belongs to the UMP kinase family. As to quaternary structure, homohexamer.

The protein localises to the cytoplasm. It catalyses the reaction UMP + ATP = UDP + ADP. It participates in pyrimidine metabolism; CTP biosynthesis via de novo pathway; UDP from UMP (UMPK route): step 1/1. Its activity is regulated as follows. Inhibited by UTP. Functionally, catalyzes the reversible phosphorylation of UMP to UDP. This is Uridylate kinase from Nitrosomonas europaea (strain ATCC 19718 / CIP 103999 / KCTC 2705 / NBRC 14298).